We begin with the raw amino-acid sequence, 177 residues long: Adenine phosphoribosyltransferase (177 aa).

The protein belongs to the purine/pyrimidine phosphoribosyltransferase family. In terms of assembly, homodimer.

Its subcellular location is the cytoplasm. It carries out the reaction AMP + diphosphate = 5-phospho-alpha-D-ribose 1-diphosphate + adenine. Its pathway is purine metabolism; AMP biosynthesis via salvage pathway; AMP from adenine: step 1/1. Its function is as follows. Catalyzes a salvage reaction resulting in the formation of AMP, that is energically less costly than de novo synthesis. The chain is Adenine phosphoribosyltransferase from Mycobacteroides abscessus (strain ATCC 19977 / DSM 44196 / CCUG 20993 / CIP 104536 / JCM 13569 / NCTC 13031 / TMC 1543 / L948) (Mycobacterium abscessus).